Here is a 1369-residue protein sequence, read N- to C-terminus: DNA-directed RNA polymerase subunit beta (1369 aa).

Belongs to the RNA polymerase beta chain family. The RNAP catalytic core consists of 2 alpha, 1 beta, 1 beta' and 1 omega subunit. When a sigma factor is associated with the core the holoenzyme is formed, which can initiate transcription.

The catalysed reaction is RNA(n) + a ribonucleoside 5'-triphosphate = RNA(n+1) + diphosphate. In terms of biological role, DNA-dependent RNA polymerase catalyzes the transcription of DNA into RNA using the four ribonucleoside triphosphates as substrates. The sequence is that of DNA-directed RNA polymerase subunit beta from Solidesulfovibrio magneticus (strain ATCC 700980 / DSM 13731 / RS-1) (Desulfovibrio magneticus).